A 259-amino-acid polypeptide reads, in one-letter code: Tryptophan synthase alpha chain (259 aa).

Residues Glu-35 and Asp-46 each act as proton acceptor in the active site.

Belongs to the TrpA family. In terms of assembly, tetramer of two alpha and two beta chains.

It catalyses the reaction (1S,2R)-1-C-(indol-3-yl)glycerol 3-phosphate + L-serine = D-glyceraldehyde 3-phosphate + L-tryptophan + H2O. The protein operates within amino-acid biosynthesis; L-tryptophan biosynthesis; L-tryptophan from chorismate: step 5/5. The alpha subunit is responsible for the aldol cleavage of indoleglycerol phosphate to indole and glyceraldehyde 3-phosphate. This chain is Tryptophan synthase alpha chain, found in Methanococcus vannielii (strain ATCC 35089 / DSM 1224 / JCM 13029 / OCM 148 / SB).